The sequence spans 433 residues: Mannan endo-1,4-beta-mannosidase 2 (433 aa).

A signal peptide spans 1–28 (MAAPTGNGPVIPILGFLTCVAFIYLSFG). A glycan (N-linked (GlcNAc...) asparagine) is linked at N46. Position 98 (W98) interacts with substrate. N169 carries an N-linked (GlcNAc...) asparagine glycan. Position 214 (N214) interacts with substrate. E215 functions as the Proton donor in the catalytic mechanism. Y295 provides a ligand contact to substrate. The active-site Nucleophile is E335. W377 lines the substrate pocket.

It belongs to the glycosyl hydrolase 5 (cellulase A) family. In terms of tissue distribution, expressed in roots, stems, leaves and seeds.

Its subcellular location is the secreted. The catalysed reaction is Random hydrolysis of (1-&gt;4)-beta-D-mannosidic linkages in mannans, galactomannans and glucomannans.. The protein is Mannan endo-1,4-beta-mannosidase 2 (MAN2) of Arabidopsis thaliana (Mouse-ear cress).